A 281-amino-acid polypeptide reads, in one-letter code: Aspartate/glutamate leucyltransferase (281 aa).

The protein belongs to the R-transferase family. Bpt subfamily.

The protein resides in the cytoplasm. It carries out the reaction N-terminal L-glutamyl-[protein] + L-leucyl-tRNA(Leu) = N-terminal L-leucyl-L-glutamyl-[protein] + tRNA(Leu) + H(+). The catalysed reaction is N-terminal L-aspartyl-[protein] + L-leucyl-tRNA(Leu) = N-terminal L-leucyl-L-aspartyl-[protein] + tRNA(Leu) + H(+). Functions in the N-end rule pathway of protein degradation where it conjugates Leu from its aminoacyl-tRNA to the N-termini of proteins containing an N-terminal aspartate or glutamate. The polypeptide is Aspartate/glutamate leucyltransferase (Paracoccus denitrificans (strain Pd 1222)).